The following is a 167-amino-acid chain: SsrA-binding protein (167 aa).

Positions glutamine 139–alanine 167 are disordered. Over residues arginine 144–arginine 158 the composition is skewed to basic and acidic residues.

The protein belongs to the SmpB family.

The protein localises to the cytoplasm. Required for rescue of stalled ribosomes mediated by trans-translation. Binds to transfer-messenger RNA (tmRNA), required for stable association of tmRNA with ribosomes. tmRNA and SmpB together mimic tRNA shape, replacing the anticodon stem-loop with SmpB. tmRNA is encoded by the ssrA gene; the 2 termini fold to resemble tRNA(Ala) and it encodes a 'tag peptide', a short internal open reading frame. During trans-translation Ala-aminoacylated tmRNA acts like a tRNA, entering the A-site of stalled ribosomes, displacing the stalled mRNA. The ribosome then switches to translate the ORF on the tmRNA; the nascent peptide is terminated with the 'tag peptide' encoded by the tmRNA and targeted for degradation. The ribosome is freed to recommence translation, which seems to be the essential function of trans-translation. The sequence is that of SsrA-binding protein from Xylella fastidiosa (strain M12).